Here is a 667-residue protein sequence, read N- to C-terminus: Chaperone protein DnaK (667 aa).

At Thr-196 the chain carries Phosphothreonine; by autocatalysis. Disordered regions lie at residues 495–525 (EANS…RKER) and 595–667 (AGEE…GDDE). Basic and acidic residues predominate over residues 506–525 (EKMKEEAEQHAEEDERRKER). A compositionally biased stretch (low complexity) spans 595 to 612 (AGEEIREAQQQQAQQGAA). Over residues 630-641 (GPAGGPTGGPAS) the composition is skewed to gly residues. Positions 647–667 (DSDEEDVQDADYEVVDEGDDE) are enriched in acidic residues.

The protein belongs to the heat shock protein 70 family.

Acts as a chaperone. This Salinibacter ruber (strain DSM 13855 / M31) protein is Chaperone protein DnaK.